The primary structure comprises 190 residues: MLEILKRSLYDAPVFKRGDYNYFIHPITDGVPETRPELIREVVCHIIRIADLDVDKIVTVEAMGIPIGGALSLVTDIPLVIIRKKMYGLPGEIEVSQVTGYSKSKIYLNGIKKGDRVIFVDDVVSTGGTAIAVMKALEAAGAVIRDAVVVIERGAGAERVRSAGYPLKTMVKVDVDEKRVFRVEEVSFRS.

This sequence belongs to the purine/pyrimidine phosphoribosyltransferase family. Archaeal HPRT subfamily. In terms of assembly, homodimer.

Its subcellular location is the cytoplasm. The catalysed reaction is IMP + diphosphate = hypoxanthine + 5-phospho-alpha-D-ribose 1-diphosphate. The enzyme catalyses GMP + diphosphate = guanine + 5-phospho-alpha-D-ribose 1-diphosphate. Its pathway is purine metabolism; IMP biosynthesis via salvage pathway; IMP from hypoxanthine: step 1/1. Its function is as follows. Catalyzes a salvage reaction resulting in the formation of IMP that is energically less costly than de novo synthesis. This Methanothrix thermoacetophila (strain DSM 6194 / JCM 14653 / NBRC 101360 / PT) (Methanosaeta thermophila) protein is Hypoxanthine/guanine phosphoribosyltransferase.